We begin with the raw amino-acid sequence, 514 residues long: Major facilitator superfamily domain-containing protein 4A (514 aa).

5 helical membrane-spanning segments follow: residues 19-39 (LTYW…GPTL), 53-73 (ISWV…LGGV), 82-102 (LWAL…IPFC), 107-127 (VLAS…TVAN), and 139-159 (AVFL…SPLI). A glycan (N-linked (GlcNAc...) asparagine) is linked at Asn177. The next 7 membrane-spanning stretches (helical) occupy residues 221–241 (YAFW…LMLL), 307–327 (FFAI…LTGA), 347–367 (VAGY…LLSI), 376–396 (ATMV…LLIF), 400–420 (VVFL…TFPS), 438–458 (VLVT…GSIF), and 466–486 (FLVC…LLLF).

It belongs to the major facilitator superfamily.

The protein resides in the membrane. The protein is Major facilitator superfamily domain-containing protein 4A of Homo sapiens (Human).